A 301-amino-acid chain; its full sequence is Triplex capsid protein 2 (301 aa).

The protein belongs to the herpesviridae TRX2 protein family. In terms of assembly, interacts with TRX1 and major capisd protein/MCP.

It is found in the virion. It localises to the host nucleus. Structural component of the T=16 icosahedral capsid. The capsid is composed of pentamers and hexamers of major capsid protein/MCP, which are linked together by heterotrimers called triplexes. These triplexes are formed by a single molecule of triplex protein 1/TRX1 and two copies of triplex protein 2/TRX2. Additionally, TRX1 is required for efficient transport of TRX2 to the nucleus, which is the site of capsid assembly. The polypeptide is Triplex capsid protein 2 (Homo sapiens (Human)).